The primary structure comprises 305 residues: 17-beta-hydroxysteroid dehydrogenase type 3 (305 aa).

44 to 73 contributes to the NADP(+) binding site; sequence GQWAVITGAGDGIGKAYSFELARHGLNVVL. Residue S181 coordinates substrate. Residue Y194 is the Proton acceptor of the active site.

It belongs to the short-chain dehydrogenases/reductases (SDR) family. 17-beta-HSD 3 subfamily. Expressed in the testes.

The protein resides in the endoplasmic reticulum. The enzyme catalyses a 17beta-hydroxy steroid + NADP(+) = a 17-oxo steroid + NADPH + H(+). It carries out the reaction testosterone + NADP(+) = androst-4-ene-3,17-dione + NADPH + H(+). The catalysed reaction is 17beta-estradiol + NADP(+) = estrone + NADPH + H(+). It catalyses the reaction 3beta-hydroxyandrost-5-en-17-one + NADPH + H(+) = androst-5-en-3beta,17beta-diol + NADP(+). The enzyme catalyses 17beta-hydroxy-5alpha-androstan-3-one + NADP(+) = 5alpha-androstan-3,17-dione + NADPH + H(+). It carries out the reaction androsterone + NADPH + H(+) = 5alpha-androstane-3alpha,17beta-diol + NADP(+). The catalysed reaction is 3beta-hydroxy-5alpha-androstan-17-one + NADPH + H(+) = 5alpha-androstane-3beta,17beta-diol + NADP(+). It catalyses the reaction androst-4-ene-3,11,17-trione + NADPH + H(+) = 17beta-hydroxyandrost-4-ene-3,11-dione + NADP(+). The enzyme catalyses 11beta-hydroxyandrost-4-ene-3,17-dione + NADPH + H(+) = 11beta,17beta-dihydroxyandrost-4-ene-3-one + NADP(+). It participates in hormone biosynthesis; testosterone biosynthesis. The protein operates within steroid metabolism. Catalyzes the conversion of 17-oxosteroids to 17beta-hydroxysteroids. Favors the reduction of androstenedione to testosterone. Testosterone is the key androgen driving male development and function. Uses NADPH while the two other EDH17B enzymes use NADH. Androgens such as epiandrosterone, dehydroepiandrosterone, androsterone and androstanedione are accepted as substrates and reduced at C-17. Can reduce 11-ketoandrostenedione as well as 11beta-hydroxyandrostenedione at C-17 to the respective testosterone forms. Plays a role in the rate-limiting-step for the maximum level of testosterone production by the testis but does not affect basal testosterone production. This Mus musculus (Mouse) protein is 17-beta-hydroxysteroid dehydrogenase type 3.